A 356-amino-acid chain; its full sequence is Heat-inducible transcription repressor HrcA (356 aa).

This sequence belongs to the HrcA family.

Functionally, negative regulator of class I heat shock genes (grpE-dnaK-dnaJ and groELS operons). Prevents heat-shock induction of these operons. The chain is Heat-inducible transcription repressor HrcA from Chlorobaculum parvum (strain DSM 263 / NCIMB 8327) (Chlorobium vibrioforme subsp. thiosulfatophilum).